The following is a 716-amino-acid chain: Splicing factor Cactin (716 aa).

The segment at 1–104 is disordered; sequence MGSHGKGKRD…SKKAQKKALR (104 aa). Basic and acidic residues predominate over residues 10–22; that stretch reads DRSGRQKKRRDES. Low complexity predominate over residues 25–45; it reads GSESESYTSDSDGSDDLSPPR. The segment covering 46–61 has biased composition (basic residues); it reads SSRRKKGSSSRRTRRR. The span at 81–95 shows a compositional bias: basic and acidic residues; the sequence is SSKDYSEEKVTEYMS. Positions 153–201 form a coiled coil; the sequence is SVKAEKRRHRERMTEVEKVKKRREERAVEKARHEEEMALLARERARAEF. Residue Ser450 is modified to Phosphoserine. The disordered stretch occupies residues 466–525; it reads VEENEEEINDTNLSDAEEAFSPEPVAEEEEADEAAEAAGSFSPELMHGDDREEAIDPEED. Residues 468 to 500 show a composition bias toward acidic residues; that stretch reads ENEEEINDTNLSDAEEAFSPEPVAEEEEADEAA.

It belongs to the CACTIN family. In terms of assembly, interacts with At5g63440.

Its subcellular location is the nucleus speckle. In terms of biological role, plays a role in pre-mRNA splicing by facilitating excision of a subset of introns. Required for embryogenesis. The polypeptide is Splicing factor Cactin (CTN) (Arabidopsis thaliana (Mouse-ear cress)).